We begin with the raw amino-acid sequence, 625 residues long: Grainyhead-like protein 2 homolog (625 aa).

Disordered regions lie at residues M1 to N24, V82 to N112, and E428 to K453. The segment at M1–E93 is transcription activation. Polar residues-rich tracts occupy residues L98–G109 and Q440–D451. Residues S244 to I482 enclose the Grh/CP2 DB domain.

This sequence belongs to the grh/CP2 family. Grainyhead subfamily. As to quaternary structure, homodimer, also forms heterodimers with GRHL1 or GRHL3. In terms of tissue distribution, expressed in keratinocytes (at protein level). Highly expressed in placenta, prostate, brain and kidney. Lower-level expression in a variety of epithelial tissues such as thymus, lung, salivary gland, mammary gland and digestive tract. Expressed in the cochlear. Expressed in corneal epithelial cells, but not in the endothelium or stroma.

It localises to the nucleus. The protein resides in the membrane. Transcription factor playing an important role in primary neurulation and in epithelial development. Binds directly to the consensus DNA sequence 5'-AACCGGTT-3' acting as an activator and repressor on distinct target genes. During embryogenesis, plays unique and cooperative roles with GRHL3 in establishing distinct zones of primary neurulation. Essential for closure 3 (rostral end of the forebrain), functions cooperatively with GRHL3 in closure 2 (forebrain/midbrain boundary) and posterior neuropore closure. Regulates epithelial morphogenesis acting as a target gene-associated transcriptional activator of apical junctional complex components. Up-regulates of CLDN3 and CLDN4, as well as of RAB25, which increases the CLDN4 protein and its localization at tight junctions. Comprises an essential component of the transcriptional machinery that establishes appropriate expression levels of CLDN4 and CDH1 in different types of epithelia. Exhibits functional redundancy with GRHL3 in epidermal morphogenetic events and epidermal wound repair. In lung, forms a regulatory loop with NKX2-1 that coordinates lung epithelial cell morphogenesis and differentiation. In keratinocytes, plays a role in telomerase activation during cellular proliferation, regulates TERT expression by binding to TERT promoter region and inhibiting DNA methylation at the 5'-CpG island, possibly by interfering with DNMT1 enzyme activity. In addition, impairs keratinocyte differentiation and epidermal function by inhibiting the expression of genes clustered at the epidermal differentiation complex (EDC) as well as GRHL1 and GRHL3 through epigenetic mechanisms. In Homo sapiens (Human), this protein is Grainyhead-like protein 2 homolog (GRHL2).